The primary structure comprises 483 residues: Altronate oxidoreductase (483 aa).

18 to 29 (IIQFGEGNFLRA) provides a ligand contact to NAD(+).

Belongs to the mannitol dehydrogenase family. UxaB subfamily.

The catalysed reaction is D-altronate + NAD(+) = keto-D-tagaturonate + NADH + H(+). Its pathway is carbohydrate metabolism; pentose and glucuronate interconversion. This is Altronate oxidoreductase from Escherichia coli O7:K1 (strain IAI39 / ExPEC).